An 859-amino-acid polypeptide reads, in one-letter code: Nitrate reductase [NADPH] (859 aa).

C137 provides a ligand contact to Mo-molybdopterin. The region spanning 502-578 is the Cytochrome b5 heme-binding domain; the sequence is DVVIKYSEFE…LPSMHLGRLE (77 aa). Heme is bound by residues H538 and H561. In terms of domain architecture, FAD-binding FR-type spans 602-713; it reads RKWHKITLAE…KGPVGEFEYV (112 aa). FAD-binding positions include 655–658, 672–676, F677, 687–689, S737, and T740; these read RAYT, LIKVY, and IMT. NADP(+) is bound at residue 829 to 838; sequence MLLVCGPPGM.

It belongs to the nitrate reductase family. Homodimer. The cofactor is FAD. Requires heme as cofactor. It depends on Mo-molybdopterin as a cofactor.

It catalyses the reaction nitrite + NADP(+) + H2O = nitrate + NADPH + H(+). Functionally, nitrate reductase is a key enzyme involved in the first step of nitrate assimilation in plants, fungi and bacteria. This Pichia angusta (Yeast) protein is Nitrate reductase [NADPH] (YNR1).